A 172-amino-acid chain; its full sequence is Ribosome maturation factor RimM (172 aa).

The region spanning 95-168 (DEGEFYYHQI…RVDVAIMEGL (74 aa)) is the PRC barrel domain.

It belongs to the RimM family. In terms of assembly, binds ribosomal protein uS19.

The protein resides in the cytoplasm. An accessory protein needed during the final step in the assembly of 30S ribosomal subunit, possibly for assembly of the head region. Essential for efficient processing of 16S rRNA. May be needed both before and after RbfA during the maturation of 16S rRNA. It has affinity for free ribosomal 30S subunits but not for 70S ribosomes. This chain is Ribosome maturation factor RimM, found in Streptococcus uberis (strain ATCC BAA-854 / 0140J).